The primary structure comprises 89 residues: Large ribosomal subunit protein bL27 (89 aa).

Residues 1 to 20 (MAHKKAGGSSRNGRDSAGRR) are disordered.

It belongs to the bacterial ribosomal protein bL27 family.

This chain is Large ribosomal subunit protein bL27, found in Jannaschia sp. (strain CCS1).